Reading from the N-terminus, the 222-residue chain is 7-cyano-7-deazaguanine synthase (222 aa).

11 to 21 (FSGGQDSTTCL) serves as a coordination point for ATP. The Zn(2+) site is built by Cys187, Cys195, Cys198, and Cys201.

It belongs to the QueC family. Zn(2+) serves as cofactor.

The enzyme catalyses 7-carboxy-7-deazaguanine + NH4(+) + ATP = 7-cyano-7-deazaguanine + ADP + phosphate + H2O + H(+). It participates in purine metabolism; 7-cyano-7-deazaguanine biosynthesis. Functionally, catalyzes the ATP-dependent conversion of 7-carboxy-7-deazaguanine (CDG) to 7-cyano-7-deazaguanine (preQ(0)). This Actinobacillus pleuropneumoniae serotype 7 (strain AP76) protein is 7-cyano-7-deazaguanine synthase.